The chain runs to 351 residues: F-box protein At1g70590 (351 aa).

A disordered region spans residues 1–60; the sequence is MKQRTWPCRSEGSRFSSLSFLKPHDKDKRSRISSINKATAKSTTSSRSSSSSSSSRPPSN. Positions 32 to 41 are enriched in polar residues; sequence ISSINKATAK. Low complexity predominate over residues 42–59; sequence STTSSRSSSSSSSSRPPS. Residues 62–111 enclose the F-box domain; it reads FGDFSMLPYDILMKIAAPFSHPNLQAASLVCKSWRDALKPLRESMLLIRW. Residues 105–141 form a Sel1-like repeat; the sequence is SMLLIRWGKKYKHGRGGVRANLDKALDSFLKGAMRGS. The stretch at 142–175 is one TPR repeat; that stretch reads TLAMVDAGLVYWERGEKEKAVNLYRRASELGDAV.

The sequence is that of F-box protein At1g70590 from Arabidopsis thaliana (Mouse-ear cress).